Consider the following 588-residue polypeptide: Pectinesterase 4 (588 aa).

Positions 1-24 are cleaved as a signal peptide; that stretch reads MIGKVVVSVASILLIVGVAIGVVA. Residues Asn86, Asn206, and Asn342 are each glycosylated (N-linked (GlcNAc...) asparagine). The substrate site is built by Thr353 and Gln383. Asp406 functions as the Proton donor in the catalytic mechanism. Catalysis depends on Asp427, which acts as the Nucleophile. The substrate site is built by Arg496 and Trp498.

In the N-terminal section; belongs to the PMEI family. The protein in the C-terminal section; belongs to the pectinesterase family. In terms of tissue distribution, expressed in pollen grains and pollen tubes.

The protein localises to the secreted. It is found in the cell wall. It catalyses the reaction [(1-&gt;4)-alpha-D-galacturonosyl methyl ester](n) + n H2O = [(1-&gt;4)-alpha-D-galacturonosyl](n) + n methanol + n H(+). It participates in glycan metabolism; pectin degradation; 2-dehydro-3-deoxy-D-gluconate from pectin: step 1/5. Functionally, acts in the modification of cell walls via demethylesterification of cell wall pectin. Plays an important role in growth of pollen tubes in female floral tissues, possibly via enhancing the interaction between the pollen tube and female floral tissues by modification of the cell walls. The polypeptide is Pectinesterase 4 (PME4) (Arabidopsis thaliana (Mouse-ear cress)).